Here is a 294-residue protein sequence, read N- to C-terminus: MSKKDALSRFLFEKSAVRGELVTVTETYQSILENHHYPEPVQHLLGDLLVATSLLTATLKFDGDITVQLQGDGPVRLVVINGNNEQQMRGVARFSDDVKAGSSLKEMMGNGFMVITITPKKGERYQGIVALDGETIEACIDNYFNQSEQLPTRVFIRTGLQDGKAAGAGMLLQALPASAEHSADETAEHFELLTQLTHTIKAQELFTLDTKEILHRLYHEEDVTLYDPQPIAFHCTCSRKRCEDTLVTLSKEDVAHLLQEQGKIDMECEYCGAHYIFTEEDINNINKLSSSNLH.

Disulfide bonds link cysteine 235–cysteine 237 and cysteine 268–cysteine 271.

This sequence belongs to the HSP33 family. In terms of processing, under oxidizing conditions two disulfide bonds are formed involving the reactive cysteines. Under reducing conditions zinc is bound to the reactive cysteines and the protein is inactive.

The protein localises to the cytoplasm. Redox regulated molecular chaperone. Protects both thermally unfolding and oxidatively damaged proteins from irreversible aggregation. Plays an important role in the bacterial defense system toward oxidative stress. This chain is 33 kDa chaperonin, found in Proteus mirabilis (strain HI4320).